The chain runs to 281 residues: Lipoyl synthase (281 aa).

The [4Fe-4S] cluster site is built by C37, C42, C48, C63, C67, C70, and S274. One can recognise a Radical SAM core domain in the interval 49 to 263; the sequence is WSRGTATFMI…RQQAVNKGFK (215 aa).

The protein belongs to the radical SAM superfamily. Lipoyl synthase family. [4Fe-4S] cluster is required as a cofactor.

It is found in the cytoplasm. It carries out the reaction [[Fe-S] cluster scaffold protein carrying a second [4Fe-4S](2+) cluster] + N(6)-octanoyl-L-lysyl-[protein] + 2 oxidized [2Fe-2S]-[ferredoxin] + 2 S-adenosyl-L-methionine + 4 H(+) = [[Fe-S] cluster scaffold protein] + N(6)-[(R)-dihydrolipoyl]-L-lysyl-[protein] + 4 Fe(3+) + 2 hydrogen sulfide + 2 5'-deoxyadenosine + 2 L-methionine + 2 reduced [2Fe-2S]-[ferredoxin]. It participates in protein modification; protein lipoylation via endogenous pathway; protein N(6)-(lipoyl)lysine from octanoyl-[acyl-carrier-protein]: step 2/2. Functionally, catalyzes the radical-mediated insertion of two sulfur atoms into the C-6 and C-8 positions of the octanoyl moiety bound to the lipoyl domains of lipoate-dependent enzymes, thereby converting the octanoylated domains into lipoylated derivatives. This is Lipoyl synthase from Parabacteroides distasonis (strain ATCC 8503 / DSM 20701 / CIP 104284 / JCM 5825 / NCTC 11152).